A 327-amino-acid polypeptide reads, in one-letter code: MNSVRTDLAVEAREMYCEKTENGDNGVRVDTKRIEDIEITTVDVLNDKGEERIRKQKGTYITLDIPKVTLYDSEDIEEISKVFADELSKIISKAKLDSSMTVLVVGLGNWNITPDSLGPKVIGKLMVTRHLKKYIPDSIDEGIRPVCAVAPGVLGITGMETGEIIRGIVQNIKPDLIVCIDALAARKMGRVNSTIQIGNTGISPGSGVGNMRMELSQKTLGVPVIAVGVPTVVDAATMANDTIDIVIEKMKGEVSEDSKFYSLLKAIDTEEKSQLIYEVLNPYVGDLLVTPKEVDMIMETLSKIIASGINIALQPALELSEINKYVN.

A propeptide spanning residues 1-7 (MNSVRTD) is cleaved from the precursor.

The protein belongs to the peptidase A25 family. As to quaternary structure, homotetramer. Post-translationally, autoproteolytically processed. The inactive tetrameric zymogen termed p46 autoprocesses to a smaller form termed p41, which is active only during spore germination.

It carries out the reaction Endopeptidase action with P4 Glu or Asp, P1 preferably Glu &gt; Asp, P1' hydrophobic and P2' Ala.. Its function is as follows. Initiates the rapid degradation of small, acid-soluble proteins during spore germination. The chain is Germination protease from Clostridium acetobutylicum (strain ATCC 824 / DSM 792 / JCM 1419 / IAM 19013 / LMG 5710 / NBRC 13948 / NRRL B-527 / VKM B-1787 / 2291 / W).